We begin with the raw amino-acid sequence, 467 residues long: Cilia- and flagella-associated protein 97 (467 aa).

Disordered stretches follow at residues 1-20, 76-235, 336-370, and 412-467; these read MDRYGNLSDDGEVDHSFFDS, IAKP…DISP, RQAAKPRSKSLTPKKPMSAPTRLYHSAINRQKEQQ, and ALSP…AAWQ. The segment covering 124–135 has biased composition (acidic residues); sequence DNYYPDEEDSSE. Over residues 162-177 the composition is skewed to polar residues; the sequence is DFVSTISSSDTEYSDT. Over residues 180 to 194 the composition is skewed to low complexity; it reads DDGASKSSYQSSKGS. Positions 198–216 are enriched in basic and acidic residues; it reads SPERKPSRSSMRELRHYAE. Polar residues predominate over residues 223–235; it reads TDVTPLSTPDISP. Positions 310 to 387 form a coiled coil; sequence KKNFSFSNDE…ALLKRLESVK (78 aa). The span at 421-439 shows a compositional bias: low complexity; that stretch reads SVSRLSPSVSSGGFSRMSS.

The protein belongs to the CFAP97 family.

This Xenopus tropicalis (Western clawed frog) protein is Cilia- and flagella-associated protein 97.